The sequence spans 88 residues: Synaptonemal complex central element protein 3 (88 aa).

A coiled-coil region spans residues 8–75; sequence ERSYDNMLKM…FLNCKEEMEK (68 aa).

Homodimer. Can form higher-order homooligomers. Interacts with SYCP1 (via tetrameric core); the interaction remodels SYCP1 homotetramers to 2:1 heterotrimers with SYCE3. SYCP1/SYCE3 heterotrimers form lattice assemblies as part of the mature synaptonemal complex via both lateral and head-to-head interactions. Interacts with the SYCE1-SIX6OS1 complex; the interaction recruits the SYCE1-SIX6OS1 complex to the central element of the synaptonemal complex. Interacts with the SYCE2-TEX12 complex; the interaction promotes fibrous assembly of SYCE2-TEX12 as part of the synaptonemal complex central element. Interacts with SYCE1. Interacts with SYCE2. Interacts with proteasome subunit PSMA8; to participate in meiosis progression during spermatogenesis. Interacts with SPO16. As to expression, expression is restricted to spermatocytes and is absent in spermatogonia, spermatids and spermatogonia (at protein level). Expressed in adult testis and embryonic ovary. Expressed in the convoluted seminiferous tubules in spermatogonia and spermatocytes.

Its subcellular location is the nucleus. The protein localises to the chromosome. Major component of the transverse central element of synaptonemal complexes (SCS), formed between homologous chromosomes during meiotic prophase. Required for the assembly of the central element of the synaptonemal complex during meiosis, via remodeling of SYCP1 lattice structures and promoting recruitment of SYCE2-TEX12 and SYCE1-SIX60S1 complexes. Required for chromosome loading of the central element-specific SCS proteins, and for initiating synapsis between homologous chromosomes. Chromosome loading appears to require SYCP1. Required for fertility and normal testis development. May play a role in apoptosis of spermatogenic cells and pathogenesis of cryptorchidism. The protein is Synaptonemal complex central element protein 3 of Mus musculus (Mouse).